Here is a 216-residue protein sequence, read N- to C-terminus: ATP phosphoribosyltransferase (216 aa).

Belongs to the ATP phosphoribosyltransferase family. Short subfamily. Heteromultimer composed of HisG and HisZ subunits.

The protein localises to the cytoplasm. The catalysed reaction is 1-(5-phospho-beta-D-ribosyl)-ATP + diphosphate = 5-phospho-alpha-D-ribose 1-diphosphate + ATP. Its pathway is amino-acid biosynthesis; L-histidine biosynthesis; L-histidine from 5-phospho-alpha-D-ribose 1-diphosphate: step 1/9. In terms of biological role, catalyzes the condensation of ATP and 5-phosphoribose 1-diphosphate to form N'-(5'-phosphoribosyl)-ATP (PR-ATP). Has a crucial role in the pathway because the rate of histidine biosynthesis seems to be controlled primarily by regulation of HisG enzymatic activity. The protein is ATP phosphoribosyltransferase of Rubrobacter xylanophilus (strain DSM 9941 / JCM 11954 / NBRC 16129 / PRD-1).